The chain runs to 351 residues: MLKNDLFLRALKRQSTPRTPIWVMRQAGRYLPEYRAVREKTDFLTLCKTPELACEVTIQPVDLMGVDAAIIFSDILVVNEAMGMDVQIIESKGIKLTPEIRSQADIDKLIDPDVEEKLGYVFDAIRLTKKELNDRVPLIGFSGAAWTLFTYAVEGGGSKNYANAKKMMYREPQMAHQLLQKITTCISNYLIKQVEAGADAIQIFDSWASALSEDDYREFALPYIKQNVAAVKAAYPEVPVIVFAKDMNTILSDVADTGADAVGLGWNIDIAKARKELNDRVCLQGNMDPTVLYGTPEKIKSEAAKILKQFGQHTDCSGHVFNLGHGILPDVDPANLKCLVEFVKEESAKYH.

Substrate contacts are provided by residues Arg25–Arg29, Asp74, Tyr151, Ser206, and His325.

Belongs to the uroporphyrinogen decarboxylase family. As to quaternary structure, homodimer.

Its subcellular location is the cytoplasm. It catalyses the reaction uroporphyrinogen III + 4 H(+) = coproporphyrinogen III + 4 CO2. The protein operates within porphyrin-containing compound metabolism; protoporphyrin-IX biosynthesis; coproporphyrinogen-III from 5-aminolevulinate: step 4/4. Its function is as follows. Catalyzes the decarboxylation of four acetate groups of uroporphyrinogen-III to yield coproporphyrinogen-III. This chain is Uroporphyrinogen decarboxylase, found in Chlorobaculum parvum (strain DSM 263 / NCIMB 8327) (Chlorobium vibrioforme subsp. thiosulfatophilum).